A 387-amino-acid polypeptide reads, in one-letter code: Phosphoglycerate kinase (387 aa).

Residues 21 to 23 (DLN), Arg-36, 59 to 62 (HLGR), Arg-113, and Arg-146 each bind substrate. Residues Lys-197, Glu-314, and 340 to 343 (GGDT) each bind ATP.

The protein belongs to the phosphoglycerate kinase family. In terms of assembly, monomer.

The protein localises to the cytoplasm. The catalysed reaction is (2R)-3-phosphoglycerate + ATP = (2R)-3-phospho-glyceroyl phosphate + ADP. It participates in carbohydrate degradation; glycolysis; pyruvate from D-glyceraldehyde 3-phosphate: step 2/5. This chain is Phosphoglycerate kinase, found in Photorhabdus luminescens (Xenorhabdus luminescens).